The primary structure comprises 142 residues: HTH-type transcriptional regulator MntR (142 aa).

Residues methionine 1 to threonine 63 form the HTH dtxR-type domain. Positions 8, 11, 77, 99, 102, and 103 each coordinate Mn(2+).

The protein belongs to the DtxR/MntR family. Homodimer.

It localises to the cytoplasm. DNA binding is strongly activated by Mn(2+). Its function is as follows. Central regulator of manganese homeostasis. The protein is HTH-type transcriptional regulator MntR of Bacillus cereus (strain ATCC 14579 / DSM 31 / CCUG 7414 / JCM 2152 / NBRC 15305 / NCIMB 9373 / NCTC 2599 / NRRL B-3711).